Here is a 399-residue protein sequence, read N- to C-terminus: L-asparaginase-like protein GG20738 (399 aa).

The first 22 residues, 1-22 (MLAQSCCLRLLILLLLCKSTCS), serve as a signal peptide directing secretion. 3 disulfides stabilise this stretch: Cys-90/Cys-95, Cys-189/Cys-205, and Cys-344/Cys-371.

The protein belongs to the Ntn-hydrolase family.

This chain is L-asparaginase-like protein GG20738, found in Drosophila erecta (Fruit fly).